We begin with the raw amino-acid sequence, 41 residues long: Photosystem I reaction center subunit IX (41 aa).

The chain crosses the membrane as a helical span at residues 7 to 27 (YLSVAPVLSTLWFGALAGLLI).

The protein belongs to the PsaJ family.

The protein resides in the plastid. It is found in the chloroplast thylakoid membrane. May help in the organization of the PsaE and PsaF subunits. This Jasminum nudiflorum (Winter jasmine) protein is Photosystem I reaction center subunit IX.